We begin with the raw amino-acid sequence, 209 residues long: Large ribosomal subunit protein uL3 (209 aa).

The disordered stretch occupies residues 128 to 166 (FGGGSRTHGQSDRLRAPGSVGGSSDPSRTFKGTRMAGRM).

Belongs to the universal ribosomal protein uL3 family. Part of the 50S ribosomal subunit. Forms a cluster with proteins L14 and L19.

Its function is as follows. One of the primary rRNA binding proteins, it binds directly near the 3'-end of the 23S rRNA, where it nucleates assembly of the 50S subunit. This Chlorobaculum parvum (strain DSM 263 / NCIMB 8327) (Chlorobium vibrioforme subsp. thiosulfatophilum) protein is Large ribosomal subunit protein uL3.